Reading from the N-terminus, the 65-residue chain is Conotoxin Bu19 (65 aa).

The first 21 residues, 1–21 (MGMRMVFTVFLLVVLATTVVS), serve as a signal peptide directing secretion. Residues 22 to 48 (FTSDRASDGRNAAANDKASDLAALAVR) constitute a propeptide that is removed on maturation. 2 cysteine pairs are disulfide-bonded: C50–C56 and C51–C64. C64 carries the cysteine amide modification.

This sequence belongs to the conotoxin A superfamily. Expressed by the venom duct.

The protein localises to the secreted. The protein is Conotoxin Bu19 of Conus bullatus (Bubble cone).